The primary structure comprises 299 residues: Tyrosine recombinase XerC (299 aa).

In terms of domain architecture, Core-binding (CB) spans 1–85 (MERQLDAYCE…AVRGLYHYLN (85 aa)). A Tyr recombinase domain is found at 106-285 (RLPKTLDTDR…DFQHLATVYD (180 aa)). Active-site residues include R146, K170, H237, R240, and H263. Y272 serves as the catalytic O-(3'-phospho-DNA)-tyrosine intermediate.

This sequence belongs to the 'phage' integrase family. XerC subfamily. In terms of assembly, forms a cyclic heterotetrameric complex composed of two molecules of XerC and two molecules of XerD.

It localises to the cytoplasm. Site-specific tyrosine recombinase, which acts by catalyzing the cutting and rejoining of the recombining DNA molecules. The XerC-XerD complex is essential to convert dimers of the bacterial chromosome into monomers to permit their segregation at cell division. It also contributes to the segregational stability of plasmids. This chain is Tyrosine recombinase XerC, found in Pseudomonas fluorescens.